Here is an 802-residue protein sequence, read N- to C-terminus: MSLSSLSRALARSARSSRQRQGSLLGGHGGLRASSPPLPCGELGFLRSYVTSVIGNRAAVASGAGKGGDWRFLLASRQFRRLFSDKSKKNHGKHSEEENKGKGDESDKSDSKKQSSSGDQWNFEESIKQFKDMIAPLFLFGLLLLSASASSSEQEISFQEFKNKLLEPGLVDHIVVSNKSIAKVYVRSSPSIDRIQDSDIHITTSHLPGIESPSSYKYYFNIGSVDSFEEKLQEAQKALEIDPHYYVPITYTTEAKWFEEVMKYVPTVLIIGLIYLLGKRIQNGFTVGGGPGKGGRSIFSIGKVQVTKLDKNSKNKVFFKDVAGCDEAKQEIMEFVHFLKNPKKYEELGAKIPKGALLVGPPGTGKTLLAKATAGESGVPFLSISGSDFMEMFVGVGPSRVRNLFQEARQCSPSIVFIDEIDAIGRARGRGGFSGGHDERESTLNQLLVEMDGFGTTSGVVVLAGTNRPDILDKALLRPGRFDRQISIDKPDIKGRDQIFRIYLKKLKLDKEPSFYSQRLAALTPGFAGADIANVCNEAALIAARSEGTLITMQHFESAIDRVIGGLEKKNKVISKLERRTVAYHESGHAVAGWFLEHAEPLLKVTIVPRGTAALGFAQYVPNDNLLMTKEQLFDMTCMTLGGRAAEEVLIGKISTGAQNDLEKVTKMTYAQVAVYGFSEKVGLLSFPQREDGFEMSKPYSSQTASIIDTEVREWVAKAYEKTVELIKQHKDQVAQIAELLLEKEVLHQDDLVQVLGERPFKTLEPTNYDRFKQGFQDEDSNRNAELSNADGASSLGEAVAS.

The transit peptide at Met1–Gln21 directs the protein to the mitochondrion. Residues Met1–Ser23 are compositionally biased toward low complexity. Disordered regions lie at residues Met1 to Ala33 and Asp85 to Gln120. Residues Asp85–Lys113 are compositionally biased toward basic and acidic residues. Residues Met133–Glu153 form a helical membrane-spanning segment. Gly360 to Thr367 is a binding site for ATP. Position 585 (His585) interacts with Zn(2+). Glu586 is a catalytic residue. Zn(2+) contacts are provided by His589 and Asp661. The tract at residues Lys773–Ser802 is disordered.

In the N-terminal section; belongs to the AAA ATPase family. The protein in the C-terminal section; belongs to the peptidase M41 family. Requires Zn(2+) as cofactor.

It is found in the mitochondrion inner membrane. In terms of biological role, probable ATP-dependent zinc metallopeptidase. This Oryza sativa subsp. japonica (Rice) protein is ATP-dependent zinc metalloprotease FTSH 3, mitochondrial (FTSH3).